Reading from the N-terminus, the 119-residue chain is Large ribosomal subunit protein uL18 (119 aa).

Belongs to the universal ribosomal protein uL18 family. Part of the 50S ribosomal subunit; part of the 5S rRNA/L5/L18/L25 subcomplex. Contacts the 5S and 23S rRNAs.

In terms of biological role, this is one of the proteins that bind and probably mediate the attachment of the 5S RNA into the large ribosomal subunit, where it forms part of the central protuberance. The polypeptide is Large ribosomal subunit protein uL18 (Cupriavidus metallidurans (strain ATCC 43123 / DSM 2839 / NBRC 102507 / CH34) (Ralstonia metallidurans)).